The primary structure comprises 326 residues: L-threo-3-hydroxyaspartate ammonia-lyase (326 aa).

At lysine 53 the chain carries N6-(pyridoxal phosphate)lysine. Residues asparagine 80, 179–183, and serine 304 contribute to the pyridoxal 5'-phosphate site; that span reads GGGGL.

Belongs to the serine/threonine dehydratase family. In terms of assembly, monomer. Pyridoxal 5'-phosphate serves as cofactor. It depends on Mn(2+) as a cofactor. Requires Mg(2+) as cofactor. The cofactor is Ca(2+).

It carries out the reaction (3S)-3-hydroxy-L-aspartate = oxaloacetate + NH4(+). Its activity is regulated as follows. Is strongly inhibited by hydroxylamine and EDTA in vitro. Catalyzes the deamination of L-threo-3-hydroxyaspartate to oxaloacetate and ammonia. Shows a high specificity towards L-threo-3-hydroxyaspartate as other 3-hydroxyaminoacids, i.e. D,L-erythro- and D-threo-3-hydroxyaspartate, D-threonine, L-threonine, D,L-allothreonine, D-serine, and L-serine, are not substrates for this enzyme. Exhibits no detectable serine racemase activity. Is responsible for the 3-hydroxyaspartate resistance of S.cerevisiae, and thus may be involved in the detoxification of naturally occurring 3-hydroxyaspartate. The sequence is that of L-threo-3-hydroxyaspartate ammonia-lyase (SRY1) from Saccharomyces cerevisiae (strain ATCC 204508 / S288c) (Baker's yeast).